A 735-amino-acid chain; its full sequence is Protein argonaute (735 aa).

The interval 1 to 94 (MDLLSNLRRS…LVQMGTKQLD (94 aa)) is N-terminal domain. The interval 95–180 (CRNDAHRCAL…IDIHHRFYTP (86 aa)) is linker L1. The PAZ domain stretch occupies residues 181-284 (WTVHQWLEQY…SPSLTMEMLA (104 aa)). The interval 285 to 369 (KVAEDSTVCD…SKTADIRNKG (85 aa)) is linker L2. Residues 370 to 498 (CAKIGETSFG…LLCKAGWQPI (129 aa)) form a mid domain region. The segment at 499-735 (QLESVDHPEV…NISRDKLIAV (237 aa)) is PIWI domain. Catalysis depends on residues aspartate 516, glutamate 550, aspartate 584, and aspartate 709. Position 516 (aspartate 516) interacts with Mn(2+). Mn(2+) contacts are provided by aspartate 584, aspartate 709, and valine 735.

Belongs to the argonaute family. Long pAgo subfamily. Copurifies with SSB proteins Synpcc7942_0079 and Synpcc7942_0301 as well as other proteins. The cofactor is Mn(2+).

Its function is as follows. A DNA-guided ssDNA endonuclease that might play a role in defense against invading mobile genetic elements. Uses short ssDNA sequences as guides (gDNA) to bind complementary target strands, resulting in cleavage of the target DNA (tDNA). The cleavage site is 10 nucleotides (nt) downstream of the target residue base-paired with the 5'-end of the gDNA. Both 5'-P and 5'-OH gDNAs confer activity; a 5'-OH guide cleaves between nt 10-11 and nt 11-12. Guide DNA mismatches in the seed (nt 2-9) can enhance activity, mismatches 1-5 nt after the cleavage site block activity. Has no appreciable activity with guide RNA or on target RNA. In situ binds to 5'-phosphorylated DNA 14-20 nt in length; small DNA maps over the chromosome and plasmid with some preference for the replication origin and the probable termination site. Also has weak guide-independent nuclease activity on DNA called 'chopping'. Overexpression of wild-type or catalytically inactive mutant has no visible effect during growth under continuous high light for up to a month. The polypeptide is Protein argonaute (Synechococcus elongatus (strain ATCC 33912 / PCC 7942 / FACHB-805) (Anacystis nidulans R2)).